A 346-amino-acid chain; its full sequence is tRNA/tmRNA (uracil-C(5))-methyltransferase (346 aa).

Residues glutamine 168, tyrosine 197, asparagine 202, glutamate 218, and aspartate 278 each contribute to the S-adenosyl-L-methionine site. Cysteine 303 acts as the Nucleophile in catalysis. The active-site Proton acceptor is the glutamate 337.

This sequence belongs to the class I-like SAM-binding methyltransferase superfamily. RNA M5U methyltransferase family. TrmA subfamily.

The enzyme catalyses uridine(54) in tRNA + S-adenosyl-L-methionine = 5-methyluridine(54) in tRNA + S-adenosyl-L-homocysteine + H(+). It catalyses the reaction uridine(341) in tmRNA + S-adenosyl-L-methionine = 5-methyluridine(341) in tmRNA + S-adenosyl-L-homocysteine + H(+). Dual-specificity methyltransferase that catalyzes the formation of 5-methyluridine at position 54 (m5U54) in all tRNAs, and that of position 341 (m5U341) in tmRNA (transfer-mRNA). The sequence is that of tRNA/tmRNA (uracil-C(5))-methyltransferase from Campylobacter lari (strain RM2100 / D67 / ATCC BAA-1060).